Here is a 270-residue protein sequence, read N- to C-terminus: Multi-heme protein MamP (270 aa).

The Cytoplasmic segment spans residues 1 to 6; sequence MNSKLV. Positions 7–20 form a transmembrane segment; that stretch reads LLVVGVVFALVLVI. Residues 21 to 270 lie on the Lumenal side of the membrane; it reads GRQGGVVAPQ…GPCEACHVIN (250 aa). The segment at 84-201 is PDZ; that stretch reads NLKVFEGHWQ…GGLGFAQLEG (118 aa). Residues 205 to 225 carry the MCR (magnetochrome) 1 motif; that stretch reads ILPGDPRPHGYRGACTDCHPV. Residues Cys219, Cys222, His223, Cys263, Cys266, and His267 each contribute to the heme site. The MCR 2 motif lies at 245-269; sequence ITRDAVTRGVSPHEVRGPCEACHVI.

This sequence belongs to the magnetosome MamP family. As to quaternary structure, homodimer. The cofactor is heme. In terms of processing, subject to proteolytic cleavage which requires both MamE and MamO.

The protein localises to the cell inner membrane. Its function is as follows. Involved in redox-control of magnetite formation. Oxidizes Fe(2+) at alkaline pH; successively forms ferrihydrite (Fe(3+)(2)O(3) 0.5 H(2)O) then magnetite (Fe(3)O(4)) from an Fe(2+) solution. This is Multi-heme protein MamP from Magnetospirillum gryphiswaldense (strain DSM 6361 / JCM 21280 / NBRC 15271 / MSR-1).